The primary structure comprises 425 residues: GTPase Obg (425 aa).

In terms of domain architecture, Obg spans 1–158 (MFKDYAKIHV…LWLELELKLL (158 aa)). One can recognise an OBG-type G domain in the interval 159–329 (ADVGLVGFPN…LIYRTYRLLE (171 aa)). GTP-binding positions include 165-172 (GFPNAGKS), 190-194 (FTTLE), 212-215 (DIPG), 282-285 (NKTD), and 310-312 (SAL). Positions 172 and 192 each coordinate Mg(2+). In terms of domain architecture, OCT spans 341-421 (VPDERETDVT…IGRFEFEYSE (81 aa)).

This sequence belongs to the TRAFAC class OBG-HflX-like GTPase superfamily. OBG GTPase family. As to quaternary structure, monomer. Mg(2+) serves as cofactor.

It is found in the cytoplasm. In terms of biological role, an essential GTPase which binds GTP, GDP and possibly (p)ppGpp with moderate affinity, with high nucleotide exchange rates and a fairly low GTP hydrolysis rate. Plays a role in control of the cell cycle, stress response, ribosome biogenesis and in those bacteria that undergo differentiation, in morphogenesis control. This Desulforudis audaxviator (strain MP104C) protein is GTPase Obg.